The chain runs to 236 residues: THO complex subunit 7B (236 aa).

Positions Glu-99–Asn-228 form a coiled coil.

This sequence belongs to the THOC7 family. As to quaternary structure, component of the THO complex, which is composed of THO1, THO2, THO3, THO5, THO6 and THO7.

The protein resides in the nucleus. In terms of biological role, acts as a component of the THO subcomplex of the TREX complex which is thought to couple mRNA transcription, processing and nuclear export. This is THO complex subunit 7B (THO7B) from Arabidopsis thaliana (Mouse-ear cress).